A 341-amino-acid polypeptide reads, in one-letter code: Probable long-chain-alcohol O-fatty-acyltransferase 1 (341 aa).

8 helical membrane passes run 7–27 (NLIEVWISALISLSYCYYISS), 36–56 (LLSILPVCILFLVLPLFLSCV), 58–78 (FCAISVLFLSWLANFKLLLFA), 120–140 (PMPKWVLAVKILVLGVLLHVY), 149–169 (FVVLALYCLHIYLEVELVLVF), 233–253 (MFAGVMASFFVSGLMHELLYF), 261–281 (TWEVTCFFVLHGAATATEIAV), and 293–313 (AVSGLVVLTFVSVTGVWLFLA).

The protein belongs to the wax synthase family.

It localises to the membrane. It carries out the reaction a long chain fatty alcohol + a fatty acyl-CoA = a wax ester + CoA. Its function is as follows. Catalyzes the final step in the synthesis of long-chain linear esters (waxes). The polypeptide is Probable long-chain-alcohol O-fatty-acyltransferase 1 (AT1) (Arabidopsis thaliana (Mouse-ear cress)).